We begin with the raw amino-acid sequence, 308 residues long: Microtubule integrity protein mal3 (308 aa).

The region spanning 2-103 (SESRQELLAW…FVQWAKRFWD (102 aa)) is the Calponin-homology (CH) domain. The tract at residues 117–162 (RGNRGPANTRVMNSSAGATGPSRRRQVSSGSSTPSMTKSSANNNNV) is disordered. Residues 144 to 162 (SSGSSTPSMTKSSANNNNV) are compositionally biased toward low complexity. Residues 173–247 (RAKQAQQQIT…LYSTEDGFEL (75 aa)) form the EB1 C-terminal domain.

The protein belongs to the MAPRE family. Interacts with tea2.

It localises to the cytoplasm. Its subcellular location is the cytoskeleton. Its function is as follows. May play a role in regulating the integrity of microtubules possibly by influencing their stability. Involved in an anchoring mechanism to maintain tea2 and tip1 at growing microtubule ends. Strongly stimulates the ATPase activity of tea2. This is Microtubule integrity protein mal3 (mal3) from Schizosaccharomyces pombe (strain 972 / ATCC 24843) (Fission yeast).